Consider the following 124-residue polypeptide: Small ribosomal subunit protein uS13c (124 aa).

The segment at 100–124 (GQRTRTNARTRKGKVKTAVAKKKGR) is disordered. The segment covering 101-124 (QRTRTNARTRKGKVKTAVAKKKGR) has biased composition (basic residues).

Belongs to the universal ribosomal protein uS13 family. Part of the 30S ribosomal subunit.

The protein resides in the plastid. It localises to the chloroplast. In terms of biological role, located at the top of the head of the 30S subunit, it contacts several helices of the 16S rRNA. The chain is Small ribosomal subunit protein uS13c from Emiliania huxleyi (Coccolithophore).